The primary structure comprises 545 residues: CTP synthase (545 aa).

The interval 1–267 (MTKFIFVTGG…AEQTLKLLQM (267 aa)) is amidoligase domain. CTP is bound at residue serine 13. Residue serine 13 coordinates UTP. ATP-binding positions include 14–19 (SIGKGI) and aspartate 71. Mg(2+)-binding residues include aspartate 71 and glutamate 141. Residues 148–150 (DIE), 188–193 (KTKPTQ), and lysine 224 each bind CTP. UTP is bound by residues 188 to 193 (KTKPTQ) and lysine 224. The region spanning 292–534 (EIAIVGKYVS…VQAAIAQSHP (243 aa)) is the Glutamine amidotransferase type-1 domain. Glycine 354 lines the L-glutamine pocket. Catalysis depends on cysteine 381, which acts as the Nucleophile; for glutamine hydrolysis. L-glutamine is bound by residues 382-385 (LGMQ), glutamate 405, and arginine 462. Residues histidine 507 and glutamate 509 contribute to the active site.

Belongs to the CTP synthase family. As to quaternary structure, homotetramer.

The catalysed reaction is UTP + L-glutamine + ATP + H2O = CTP + L-glutamate + ADP + phosphate + 2 H(+). It carries out the reaction L-glutamine + H2O = L-glutamate + NH4(+). The enzyme catalyses UTP + NH4(+) + ATP = CTP + ADP + phosphate + 2 H(+). It participates in pyrimidine metabolism; CTP biosynthesis via de novo pathway; CTP from UDP: step 2/2. With respect to regulation, allosterically activated by GTP, when glutamine is the substrate; GTP has no effect on the reaction when ammonia is the substrate. The allosteric effector GTP functions by stabilizing the protein conformation that binds the tetrahedral intermediate(s) formed during glutamine hydrolysis. Inhibited by the product CTP, via allosteric rather than competitive inhibition. In terms of biological role, catalyzes the ATP-dependent amination of UTP to CTP with either L-glutamine or ammonia as the source of nitrogen. Regulates intracellular CTP levels through interactions with the four ribonucleotide triphosphates. This Trichormus variabilis (strain ATCC 29413 / PCC 7937) (Anabaena variabilis) protein is CTP synthase.